We begin with the raw amino-acid sequence, 182 residues long: Probable chorismate pyruvate-lyase (182 aa).

Residues R81, L119, and E171 each contribute to the substrate site.

This sequence belongs to the UbiC family.

It localises to the cytoplasm. The catalysed reaction is chorismate = 4-hydroxybenzoate + pyruvate. The protein operates within cofactor biosynthesis; ubiquinone biosynthesis. Removes the pyruvyl group from chorismate, with concomitant aromatization of the ring, to provide 4-hydroxybenzoate (4HB) for the ubiquinone pathway. The polypeptide is Probable chorismate pyruvate-lyase (Pseudomonas putida (Arthrobacter siderocapsulatus)).